The primary structure comprises 514 residues: Cytochrome P450 monooxygenase FUS8 (514 aa).

A helical transmembrane segment spans residues 24-44 (VFENLTVTNTVCAFIALFIIV). 2 N-linked (GlcNAc...) asparagine glycosylation sites follow: N225 and N443. C460 is a binding site for heme.

This sequence belongs to the cytochrome P450 family. The cofactor is heme.

It localises to the membrane. It functions in the pathway mycotoxin biosynthesis. Its function is as follows. Cytochrome P450 monooxygenase; part of the gene cluster that mediates the biosynthesis of the mycotoxin fusarin C. Within the cluster, FUS1, FUS2, FUS8 and FUS9 are sufficient for fusarin production. The roles of the other FUS members are yet undetermined. The fusarin C synthetase FUS1 is responsible for the condensation of one acetyl-coenzyme A (CoA) unit with six malonyl-CoA units and the amide linkage of the arising heptaketide and homoserine, subsequently releasing the first intermediate, prefusarin, as an alcohol with an open ring structure. The cytochrome P450 monooxygenase FUS8 participates in multiple oxidation processes at carbon C-20 and is able to use the FUS1 product as substrate, resulting in formation of 20-hydroxy-prefusarin. This reaction seems to be essential before the 2-pyrrolidone ring closure can be catalyzed by FUS2, generating 20-hydroxy-fusarin. FUS8 is able to further oxidizes carbon C-20 after ring closure, resulting in the formation of carboxy-fusarin C. As the last step, FUS9 methylates the hydroxyl group at C-21 to generate fusarin C. Fusarin C can then rearrange to epi-fusarin C, the (z)-isomers, and fusarin A and fusarin D. This is Cytochrome P450 monooxygenase FUS8 from Gibberella fujikuroi (strain CBS 195.34 / IMI 58289 / NRRL A-6831) (Bakanae and foot rot disease fungus).